Here is a 110-residue protein sequence, read N- to C-terminus: MFEKTNRMNLLFDFYQELLTTKQKAYVSFYYLDDYSLGEIAEEFEVSRQAIYDNIKRTEESLEKYEEKLGMLKKYQQREKLFTQLEAQLTKKNFLDEQVKDTLEQLKNID.

The protein belongs to the UPF0122 family.

Might take part in the signal recognition particle (SRP) pathway. This is inferred from the conservation of its genetic proximity to ftsY/ffh. May be a regulatory protein. This Listeria monocytogenes serovar 1/2a (strain ATCC BAA-679 / EGD-e) protein is UPF0122 protein lmo1802.